Consider the following 702-residue polypeptide: Threonine--tRNA ligase (702 aa).

The interval 1-30 is disordered; sequence MSAPVHPVPGADGGDPLRPATPGLRSPQVP. The TGS domain occupies 15 to 84; that stretch reads DPLRPATPGL…DVDVEVTPVP (70 aa). The catalytic stretch occupies residues 279–585; it reads DHRKLGIELD…LTEHYAGAFP (307 aa). The Zn(2+) site is built by C384, H435, and H562.

This sequence belongs to the class-II aminoacyl-tRNA synthetase family. In terms of assembly, homodimer. It depends on Zn(2+) as a cofactor.

The protein resides in the cytoplasm. It carries out the reaction tRNA(Thr) + L-threonine + ATP = L-threonyl-tRNA(Thr) + AMP + diphosphate + H(+). Catalyzes the attachment of threonine to tRNA(Thr) in a two-step reaction: L-threonine is first activated by ATP to form Thr-AMP and then transferred to the acceptor end of tRNA(Thr). Also edits incorrectly charged L-seryl-tRNA(Thr). This Mycobacterium leprae (strain Br4923) protein is Threonine--tRNA ligase.